Consider the following 67-residue polypeptide: Large ribosomal subunit protein bL35 (67 aa).

This sequence belongs to the bacterial ribosomal protein bL35 family.

This is Large ribosomal subunit protein bL35 from Novosphingobium aromaticivorans (strain ATCC 700278 / DSM 12444 / CCUG 56034 / CIP 105152 / NBRC 16084 / F199).